The sequence spans 395 residues: ATP phosphoribosyltransferase regulatory subunit (395 aa).

Belongs to the class-II aminoacyl-tRNA synthetase family. HisZ subfamily. Heteromultimer composed of HisG and HisZ subunits.

The protein resides in the cytoplasm. Its pathway is amino-acid biosynthesis; L-histidine biosynthesis; L-histidine from 5-phospho-alpha-D-ribose 1-diphosphate: step 1/9. Required for the first step of histidine biosynthesis. May allow the feedback regulation of ATP phosphoribosyltransferase activity by histidine. The polypeptide is ATP phosphoribosyltransferase regulatory subunit (Pseudomonas syringae pv. syringae (strain B728a)).